A 497-amino-acid chain; its full sequence is Probable zinc metalloprotease TRV_03476 (497 aa).

Positions 1-24 (MRFLISSLLSGLALLTSLHAFVLA) are cleaved as a signal peptide. Asn100 and Asn121 each carry an N-linked (GlcNAc...) asparagine glycan. Zn(2+) is bound by residues His171, Asp191, and Glu227. N-linked (GlcNAc...) asparagine glycosylation is present at Asn242. Asp254 provides a ligand contact to Zn(2+). Residues 411-497 (MPRNVRVNTN…ERGVAVLPFP (87 aa)) enclose the Fibronectin type-III domain. Asn424 carries N-linked (GlcNAc...) asparagine glycosylation.

The protein belongs to the peptidase M28 family. M28B subfamily. Zn(2+) is required as a cofactor.

The protein resides in the secreted. In Trichophyton verrucosum (strain HKI 0517), this protein is Probable zinc metalloprotease TRV_03476.